Consider the following 124-residue polypeptide: uncharacterized protein (124 aa).

This is an uncharacterized protein from Bacillus subtilis (strain 168).